The following is a 656-amino-acid chain: UvrABC system protein B (656 aa).

The 386-residue stretch at K29–Q414 folds into the Helicase ATP-binding domain. G42–T49 contacts ATP. Residues Y95 to V118 carry the Beta-hairpin motif. The Helicase C-terminal domain maps to Q434–L596. Residues A614–E649 form the UVR domain.

Belongs to the UvrB family. As to quaternary structure, forms a heterotetramer with UvrA during the search for lesions. Interacts with UvrC in an incision complex.

It is found in the cytoplasm. Its function is as follows. The UvrABC repair system catalyzes the recognition and processing of DNA lesions. A damage recognition complex composed of 2 UvrA and 2 UvrB subunits scans DNA for abnormalities. Upon binding of the UvrA(2)B(2) complex to a putative damaged site, the DNA wraps around one UvrB monomer. DNA wrap is dependent on ATP binding by UvrB and probably causes local melting of the DNA helix, facilitating insertion of UvrB beta-hairpin between the DNA strands. Then UvrB probes one DNA strand for the presence of a lesion. If a lesion is found the UvrA subunits dissociate and the UvrB-DNA preincision complex is formed. This complex is subsequently bound by UvrC and the second UvrB is released. If no lesion is found, the DNA wraps around the other UvrB subunit that will check the other stand for damage. The sequence is that of UvrABC system protein B from Mycoplasma genitalium (strain ATCC 33530 / DSM 19775 / NCTC 10195 / G37) (Mycoplasmoides genitalium).